We begin with the raw amino-acid sequence, 293 residues long: Cytidine deaminase 8 (293 aa).

CMP/dCMP-type deaminase domains lie at 20 to 151 and 181 to 293; these read FTPQ…LISQ and EHCN…LHCK. Substrate is bound at residue 61–63; the sequence is NVE. H74 serves as a coordination point for Zn(2+). E76 functions as the Proton donor in the catalytic mechanism. Zn(2+)-binding residues include C107 and C110.

The protein belongs to the cytidine and deoxycytidylate deaminase family. As to quaternary structure, homodimer. The cofactor is Zn(2+).

The catalysed reaction is cytidine + H2O + H(+) = uridine + NH4(+). The enzyme catalyses 2'-deoxycytidine + H2O + H(+) = 2'-deoxyuridine + NH4(+). This enzyme scavenges exogenous and endogenous cytidine and 2'-deoxycytidine for UMP synthesis. In Arabidopsis thaliana (Mouse-ear cress), this protein is Cytidine deaminase 8 (CDA8).